The chain runs to 556 residues: MFYTHVLMSKRGPLAKIWLAAHWEKKLTKAHVFECNLEITIEKILSPKVKIALRTSGHLLLGVVRIYNRKAKYLLADCSEAFLKMKMTFCPGLVDLPKENFEASYNAITLPEEFHDFDTQNMNAIDVSEHFTQNQSRPEEITLRENFDNDLIFQAESFGEESEILRRHSFFDDNILLNSSGPLIEHSSGSLTGERSLFYDSGDGFGDEGAAGEMIDNLLQDDQNILLEDMHLNREISLPSEPPNSLAVEPDNSECICVPENEKMNETILLSTEEEGFTLDPIDISDIAEKRKGKKRRLLIDPIKELSSKVIHKQLTSFADTLMVLELAPPTQRLMMWKKRGGVHTLLSTAAQDLIHAELKMLFTKCFLSSGFKLGRKMIQKESVREEVGNQNIVETSMMQEPNYQQELSKPQTWKDVIGGSQHSSHEDTNKNINSEQDIVEMVSLAAEESSLMNDLFAQEIEYSPVELESLSNEENIETERWNGRILQMLNRLRESNKMGMQSFSLMKLCRNSDRKQAAAKFYSFLVLKKQLAIELSQSAPYADIIATMGPMFYNI.

Belongs to the rad21 family. In terms of assembly, component of some meiotic cohesin complex composed of the SMC1 (SMC1A or SMC1B) and SMC3 heterodimer attached via their hinge domain, RAD21L which link them, and STAG3.

It localises to the nucleus. The protein localises to the chromosome. Functionally, meiosis-specific component of some cohesin complex required during the initial steps of prophase I in male meiosis. Probably required during early meiosis in males for separation of sister chromatids and homologous chromosomes. Replaces RAD21 in premeiotic S phase (during early stages of prophase I), while RAD21 reappears in later stages of prophase I. Involved in synaptonemal complex assembly, synapsis initiation and crossover recombination between homologous chromosomes during prophase I. The protein is Double-strand-break repair protein rad21-like protein 1 (RAD21L1) of Homo sapiens (Human).